The sequence spans 43 residues: Oxygen-evolving enhancer protein 2 (43 aa).

The protein belongs to the PsbP family.

The protein localises to the plastid. The protein resides in the chloroplast thylakoid membrane. May be involved in the regulation of photosystem II. The chain is Oxygen-evolving enhancer protein 2 from Physcomitrium patens (Spreading-leaved earth moss).